A 215-amino-acid polypeptide reads, in one-letter code: 3-demethoxyubiquinol 3-hydroxylase (215 aa).

The tract at residues 26 to 47 (PSSAHSQRPSPAVVQPEHKMSE) is disordered. The Fe cation site is built by Glu-64, Glu-94, His-97, Glu-146, Glu-178, and His-181.

It belongs to the COQ7 family. The cofactor is Fe cation.

The protein localises to the cell membrane. The enzyme catalyses a 5-methoxy-2-methyl-3-(all-trans-polyprenyl)benzene-1,4-diol + AH2 + O2 = a 3-demethylubiquinol + A + H2O. Its pathway is cofactor biosynthesis; ubiquinone biosynthesis. In terms of biological role, catalyzes the hydroxylation of 2-nonaprenyl-3-methyl-6-methoxy-1,4-benzoquinol during ubiquinone biosynthesis. The polypeptide is 3-demethoxyubiquinol 3-hydroxylase (Pseudomonas syringae pv. syringae (strain B728a)).